Here is a 494-residue protein sequence, read N- to C-terminus: tRNA-2-methylthio-N(6)-dimethylallyladenosine synthase (494 aa).

One can recognise an MTTase N-terminal domain in the interval 12-131; the sequence is PTYRVVTYGC…LPVLLKRARH (120 aa). Residues C21, C60, C94, C168, C172, and C175 each contribute to the [4Fe-4S] cluster site. Residues 154–385 form the Radical SAM core domain; the sequence is RDSAYSAWVS…ELVDDIAWQE (232 aa). Residues 387–457 form the TRAM domain; the sequence is KAQVGRAVEV…PHHLVADGGL (71 aa).

It belongs to the methylthiotransferase family. MiaB subfamily. As to quaternary structure, monomer. The cofactor is [4Fe-4S] cluster.

Its subcellular location is the cytoplasm. It carries out the reaction N(6)-dimethylallyladenosine(37) in tRNA + (sulfur carrier)-SH + AH2 + 2 S-adenosyl-L-methionine = 2-methylsulfanyl-N(6)-dimethylallyladenosine(37) in tRNA + (sulfur carrier)-H + 5'-deoxyadenosine + L-methionine + A + S-adenosyl-L-homocysteine + 2 H(+). In terms of biological role, catalyzes the methylthiolation of N6-(dimethylallyl)adenosine (i(6)A), leading to the formation of 2-methylthio-N6-(dimethylallyl)adenosine (ms(2)i(6)A) at position 37 in tRNAs that read codons beginning with uridine. The chain is tRNA-2-methylthio-N(6)-dimethylallyladenosine synthase from Cutibacterium acnes (strain DSM 16379 / KPA171202) (Propionibacterium acnes).